The primary structure comprises 79 residues: UPF0154 protein llmg_1186 (79 aa).

A helical transmembrane segment spans residues 4-24 (ILAILLMVVCLLAGFFLGTWF).

The protein belongs to the UPF0154 family.

The protein resides in the cell membrane. The polypeptide is UPF0154 protein llmg_1186 (Lactococcus lactis subsp. cremoris (strain MG1363)).